Consider the following 101-residue polypeptide: Ubiquitin-related modifier 1 (101 aa).

Gly-101 carries the 1-thioglycine modification. Gly-101 participates in a covalent cross-link: Glycyl lysine isopeptide (Gly-Lys) (interchain with K-? in acceptor proteins).

Belongs to the URM1 family. C-terminal thiocarboxylation occurs in 2 steps, it is first acyl-adenylated (-COAMP) via the hesA/moeB/thiF part of UBA4, then thiocarboxylated (-COSH) via the rhodanese domain of UBA4.

Its subcellular location is the cytoplasm. It participates in tRNA modification; 5-methoxycarbonylmethyl-2-thiouridine-tRNA biosynthesis. Its function is as follows. Acts as a sulfur carrier required for 2-thiolation of mcm(5)S(2)U at tRNA wobble positions of cytosolic tRNA(Lys), tRNA(Glu) and tRNA(Gln). Serves as sulfur donor in tRNA 2-thiolation reaction by being thiocarboxylated (-COSH) at its C-terminus by the MOCS3 homolog UBA4. The sulfur is then transferred to tRNA to form 2-thiolation of mcm(5)S(2)U. Prior mcm(5) tRNA modification by the elongator complex is required for 2-thiolation. Also acts as a ubiquitin-like protein (UBL) that is covalently conjugated via an isopeptide bond to lysine residues of target proteins such as AHP1. The thiocarboxylated form serves as substrate for conjugation and oxidative stress specifically induces the formation of UBL-protein conjugates. In Scheffersomyces stipitis (strain ATCC 58785 / CBS 6054 / NBRC 10063 / NRRL Y-11545) (Yeast), this protein is Ubiquitin-related modifier 1.